The sequence spans 411 residues: Peptidyl-prolyl cis-trans isomerase (411 aa).

An N-acetylserine modification is found at serine 2. Disordered regions lie at residues 54 to 127 (IIKR…TLSP) and 160 to 302 (NYVK…PKSK). The span at 61–87 (FEDDDFLGGDFDEDEIDEESSEEEEEE) shows a compositional bias: acidic residues. Residues serine 80 and serine 81 each carry the phosphoserine modification. At threonine 89 the chain carries Phosphothreonine. Composition is skewed to acidic residues over residues 103–118 (ESED…DEFQ) and 173–242 (EGED…EEQK). Residue tyrosine 184 is modified to Phosphotyrosine; by CK2. Serine 186 is subject to Phosphoserine; by CK2. Over residues 251–260 (KSKKEKKRKH) the composition is skewed to basic residues. A Nuclear localization signal motif is present at residues 256-271 (KKRKHEEKEEEKKAKK). The segment covering 261 to 296 (EEKEEEKKAKKVKKVEFKKDLEEGPTKPKSKKEQDK) has biased composition (basic and acidic residues). Positions 324-411 (GARVGMRYIG…FDVKLVSMKN (88 aa)) constitute a PPIase FKBP-type domain.

This sequence belongs to the FKBP-type PPIase family. FKBP3/4 subfamily. Interacts with NOP53. Post-translationally, phosphorylated at tyrosine and dephosphorylated by the phosphotyrosine-specific phosphoprotein phosphatase PTP1.

The protein localises to the nucleus. Its subcellular location is the nucleolus. The catalysed reaction is [protein]-peptidylproline (omega=180) = [protein]-peptidylproline (omega=0). Inhibited by both FK506 and rapamycin. In terms of biological role, proline isomerase that belongs to an abundant class of enzymes that catalyze the cis-trans isomerization of X-Pro peptide bonds and can accelerate the refolding of proline-containing polypeptides. Specifically binds nuclear localization sequences. May be involved in the assembly or folding of ribosomal proteins. This Saccharomyces cerevisiae (strain ATCC 204508 / S288c) (Baker's yeast) protein is Peptidyl-prolyl cis-trans isomerase.